Consider the following 356-residue polypeptide: Nitrilase, arylacetone-specific (356 aa).

The region spanning 7–280 (VRAAAVQAAS…EGLIIADLNM (274 aa)) is the CN hydrolase domain. Glu47 acts as the Proton acceptor in catalysis. Residue Lys129 is the Proton donor of the active site. Cys163 serves as the catalytic Nucleophile. A disordered region spans residues 324-356 (QEEAPEPHVQSTAAPVAVSQTQDSDTLLVQEPS). Over residues 332–356 (VQSTAAPVAVSQTQDSDTLLVQEPS) the composition is skewed to polar residues.

The protein belongs to the carbon-nitrogen hydrolase superfamily. Nitrilase family. Homohexamer.

It catalyses the reaction a nitrile + 2 H2O = a carboxylate + NH4(+). Functionally, nitrilase that acts mostly on arylacetonitriles. This is Nitrilase, arylacetone-specific from Alcaligenes faecalis.